We begin with the raw amino-acid sequence, 134 residues long: MNTVFQKDKIGIGKRKRAVARVFLVPGTGTITINKVSGEKYLQYNTNYLNAIKAPLEKLNLTNQFDIVAIVRGGGLTGQTDSIKLGVARLLCKMEHENRLVLKPFGFLSRDARIKERKKYGLRKARKASQYSKR.

This sequence belongs to the universal ribosomal protein uS9 family.

It localises to the plastid. The protein localises to the chloroplast. The protein is Small ribosomal subunit protein uS9c (rps9) of Thalassiosira pseudonana (Marine diatom).